The chain runs to 140 residues: Baculoviral IAP repeat-containing protein 5 (140 aa).

One copy of the BIR repeat lies at arginine 18 to threonine 88. Residue lysine 23 is modified to N6-acetyllysine. Threonine 34 is modified (phosphothreonine; by CDK1 and CDK15). Residue threonine 48 is modified to Phosphothreonine. Cysteine 57, cysteine 60, glutamate 76, histidine 77, histidine 80, and cysteine 84 together coordinate Zn(2+). Lysine 90, lysine 110, lysine 112, and lysine 115 each carry N6-acetyllysine. The segment covering isoleucine 113 to lysine 129 has biased composition (basic and acidic residues). The segment at isoleucine 113–alanine 140 is disordered. Threonine 117 carries the phosphothreonine; by AURKB modification. Position 129 is an N6-acetyllysine (lysine 129). The segment covering threonine 130–alanine 140 has biased composition (polar residues).

Belongs to the IAP family. Monomer or homodimer. Exists as a homodimer in the apo state and as a monomer in the CPC-bound state. The monomer protects cells against apoptosis more efficiently than the dimer. Only the dimeric form is capable of enhancing tubulin stability in cells. When phosphorylated, interacts with LAMTOR5/HBXIP; the resulting complex binds pro-CASP9, as well as active CASP9, but much less efficiently. Component of the chromosomal passenger complex (CPC) composed of at least BIRC5/survivin, CDCA8/borealin, INCENP, AURKB or AURKC; in the complex forms a triple-helix bundle-based subcomplex with INCENP and CDCA8. Interacts with JTB. Interacts (via BIR domain) with histone H3 phosphorylated at 'Thr-3' (H3pT3). Interacts with EVI5. Interacts with GTP-bound RAN in both the S and M phases of the cell cycle. Interacts with USP9X. Interacts with tubulin. Interacts with BIRC2/c-IAP1. The acetylated form at Lys-129 interacts with STAT3. The monomeric form deacetylated at Lys-129 interacts with XPO1/CRM1. The monomeric form interacts with XIAP/BIRC4. Both the dimeric and monomeric form can interact with DIABLO/SMAC. Interacts with BIRC6/bruce. Interacts with FBXL7; this interaction facilitates the polyubiquitination and subsequent proteasomal degradation of BIRC5 by the SCF(FBXL7) E3 ubiquitin-protein ligase complex. Post-translationally, ubiquitinated by the Cul9-RING ubiquitin-protein ligase complex, leading to its degradation. Ubiquitination is required for centrosomal targeting. Deubiquitinated by USP35 or USP38; leading to stabilization. In terms of processing, acetylation at Lys-129 results in its homodimerization, while deacetylation promotes the formation of monomers which heterodimerize with XPO1/CRM1 which facilitates its nuclear export. The acetylated form represses STAT3 transactivation. The dynamic equilibrium between its acetylation and deacetylation at Lys-129 determines its interaction with XPO1/CRM1, its subsequent subcellular localization, and its ability to inhibit STAT3 transactivation. In vitro phosphorylation at Thr-117 by AURKB prevents interaction with INCENP and localization to mitotic chromosomes. Phosphorylation at Thr-48 by CK2 is critical for its mitotic and anti-apoptotic activities. Phosphorylation at Thr-34 by CDK15 is critical for its anti-apoptotic activity.

It is found in the cytoplasm. The protein localises to the nucleus. It localises to the chromosome. The protein resides in the centromere. Its subcellular location is the cytoskeleton. It is found in the spindle. The protein localises to the kinetochore. It localises to the midbody. In terms of biological role, multitasking protein that has dual roles in promoting cell proliferation and preventing apoptosis. Component of a chromosome passage protein complex (CPC) which is essential for chromosome alignment and segregation during mitosis and cytokinesis. Acts as an important regulator of the localization of this complex; directs CPC movement to different locations from the inner centromere during prometaphase to midbody during cytokinesis and participates in the organization of the center spindle by associating with polymerized microtubules. Involved in the recruitment of CPC to centromeres during early mitosis via association with histone H3 phosphorylated at 'Thr-3' (H3pT3) during mitosis. The complex with RAN plays a role in mitotic spindle formation by serving as a physical scaffold to help deliver the RAN effector molecule TPX2 to microtubules. May counteract a default induction of apoptosis in G2/M phase. The acetylated form represses STAT3 transactivation of target gene promoters. May play a role in neoplasia. Inhibitor of CASP3 and CASP7. Essential for the maintenance of mitochondrial integrity and function. The protein is Baculoviral IAP repeat-containing protein 5 (Birc5) of Mus musculus (Mouse).